The primary structure comprises 192 residues: Large ribosomal subunit protein uL24c (192 aa).

The transit peptide at 1–47 (MAAMAALQSSFTSLSLSSNSFLGQRLFPSPTTLQVKTEGHSPCLIVM) directs the protein to the chloroplast.

In terms of assembly, component of the chloroplast large ribosomal subunit (LSU). Mature 70S chloroplast ribosomes of higher plants consist of a small (30S) and a large (50S) subunit. The 30S small subunit contains 1 molecule of ribosomal RNA (16S rRNA) and 24 different proteins. The 50S large subunit contains 3 rRNA molecules (23S, 5S and 4.5S rRNA) and 33 different proteins.

The protein localises to the plastid. It localises to the chloroplast. Its function is as follows. Component of the chloroplast ribosome (chloro-ribosome), a dedicated translation machinery responsible for the synthesis of chloroplast genome-encoded proteins, including proteins of the transcription and translation machinery and components of the photosynthetic apparatus. This Spinacia oleracea (Spinach) protein is Large ribosomal subunit protein uL24c (RPL24).